A 396-amino-acid chain; its full sequence is Probable peptidoglycan glycosyltransferase FtsW (396 aa).

The next 9 membrane-spanning stretches (helical) occupy residues phenylalanine 17–valine 37, valine 61–tryptophan 81, alanine 83–glycine 103, glycine 117–alanine 137, methionine 159–valine 179, phenylalanine 198–tyrosine 218, phenylalanine 274–leucine 294, phenylalanine 316–isoleucine 336, and leucine 350–leucine 370.

It belongs to the SEDS family. FtsW subfamily.

It localises to the cell inner membrane. The catalysed reaction is [GlcNAc-(1-&gt;4)-Mur2Ac(oyl-L-Ala-gamma-D-Glu-L-Lys-D-Ala-D-Ala)](n)-di-trans,octa-cis-undecaprenyl diphosphate + beta-D-GlcNAc-(1-&gt;4)-Mur2Ac(oyl-L-Ala-gamma-D-Glu-L-Lys-D-Ala-D-Ala)-di-trans,octa-cis-undecaprenyl diphosphate = [GlcNAc-(1-&gt;4)-Mur2Ac(oyl-L-Ala-gamma-D-Glu-L-Lys-D-Ala-D-Ala)](n+1)-di-trans,octa-cis-undecaprenyl diphosphate + di-trans,octa-cis-undecaprenyl diphosphate + H(+). The protein operates within cell wall biogenesis; peptidoglycan biosynthesis. In terms of biological role, peptidoglycan polymerase that is essential for cell division. The sequence is that of Probable peptidoglycan glycosyltransferase FtsW from Halomonas elongata (strain ATCC 33173 / DSM 2581 / NBRC 15536 / NCIMB 2198 / 1H9).